A 154-amino-acid polypeptide reads, in one-letter code: 6,7-dimethyl-8-ribityllumazine synthase (154 aa).

5-amino-6-(D-ribitylamino)uracil-binding positions include Phe-26, 60–62 (ALE), and 84–86 (CII). 89–90 (ET) lines the (2S)-2-hydroxy-3-oxobutyl phosphate pocket. The active-site Proton donor is the His-92. Asn-117 serves as a coordination point for 5-amino-6-(D-ribitylamino)uracil. Arg-131 is a binding site for (2S)-2-hydroxy-3-oxobutyl phosphate.

Belongs to the DMRL synthase family.

It catalyses the reaction (2S)-2-hydroxy-3-oxobutyl phosphate + 5-amino-6-(D-ribitylamino)uracil = 6,7-dimethyl-8-(1-D-ribityl)lumazine + phosphate + 2 H2O + H(+). Its pathway is cofactor biosynthesis; riboflavin biosynthesis; riboflavin from 2-hydroxy-3-oxobutyl phosphate and 5-amino-6-(D-ribitylamino)uracil: step 1/2. Its function is as follows. Catalyzes the formation of 6,7-dimethyl-8-ribityllumazine by condensation of 5-amino-6-(D-ribitylamino)uracil with 3,4-dihydroxy-2-butanone 4-phosphate. This is the penultimate step in the biosynthesis of riboflavin. The sequence is that of 6,7-dimethyl-8-ribityllumazine synthase from Acidovorax ebreus (strain TPSY) (Diaphorobacter sp. (strain TPSY)).